The sequence spans 78 residues: Large ribosomal subunit protein bL28 (78 aa).

It belongs to the bacterial ribosomal protein bL28 family.

In Pseudoalteromonas atlantica (strain T6c / ATCC BAA-1087), this protein is Large ribosomal subunit protein bL28.